The sequence spans 390 residues: tRNA (guanine(9)-N1)-methyltransferase (390 aa).

The interval 1-72 is disordered; the sequence is MDIDEESYLN…RTAQLAEGYA (72 aa). The span at 43-59 shows a compositional bias: basic and acidic residues; it reads ARLEEIKPLKRAAERER. In terms of domain architecture, SAM-dependent MTase TRM10-type spans 92 to 340; the sequence is KERKEAQRRI…AVIPIRKYAP (249 aa). Residues 246 to 247, Gly266, 270 to 274, Cys278, Leu292, and 305 to 307 contribute to the S-adenosyl-L-methionine site; these read LS, DRNRH, and KVL. Asp270 (proton acceptor) is an active-site residue. Residues 343 to 390 form a disordered region; sequence KTKRAKTETKRNEKEEEEVECTSAEGEEDIGVIEESAEVDPEDVFSNQ. A compositionally biased stretch (basic and acidic residues) spans 347 to 356; sequence AKTETKRNEK. The span at 357 to 390 shows a compositional bias: acidic residues; that stretch reads EEEEVECTSAEGEEDIGVIEESAEVDPEDVFSNQ.

It belongs to the class IV-like SAM-binding methyltransferase superfamily. TRM10 family. As to quaternary structure, monomer.

It is found in the cytoplasm. The protein localises to the nucleus. The enzyme catalyses guanosine(9) in tRNA + S-adenosyl-L-methionine = N(1)-methylguanosine(9) in tRNA + S-adenosyl-L-homocysteine + H(+). Its function is as follows. S-adenosyl-L-methionine-dependent guanine N(1)-methyltransferase that catalyzes the formation of N(1)-methylguanine at position 9 (m1G9) in cytoplasmic tRNA. This chain is tRNA (guanine(9)-N1)-methyltransferase, found in Cryptococcus neoformans var. neoformans serotype D (strain JEC21 / ATCC MYA-565) (Filobasidiella neoformans).